Consider the following 234-residue polypeptide: Leucyl/phenylalanyl-tRNA--protein transferase (234 aa).

This sequence belongs to the L/F-transferase family.

The protein localises to the cytoplasm. It catalyses the reaction N-terminal L-lysyl-[protein] + L-leucyl-tRNA(Leu) = N-terminal L-leucyl-L-lysyl-[protein] + tRNA(Leu) + H(+). It carries out the reaction N-terminal L-arginyl-[protein] + L-leucyl-tRNA(Leu) = N-terminal L-leucyl-L-arginyl-[protein] + tRNA(Leu) + H(+). The enzyme catalyses L-phenylalanyl-tRNA(Phe) + an N-terminal L-alpha-aminoacyl-[protein] = an N-terminal L-phenylalanyl-L-alpha-aminoacyl-[protein] + tRNA(Phe). Functionally, functions in the N-end rule pathway of protein degradation where it conjugates Leu, Phe and, less efficiently, Met from aminoacyl-tRNAs to the N-termini of proteins containing an N-terminal arginine or lysine. The polypeptide is Leucyl/phenylalanyl-tRNA--protein transferase (Salmonella gallinarum (strain 287/91 / NCTC 13346)).